The sequence spans 134 residues: UPF0102 protein Dshi_2830 (134 aa).

Belongs to the UPF0102 family.

The sequence is that of UPF0102 protein Dshi_2830 from Dinoroseobacter shibae (strain DSM 16493 / NCIMB 14021 / DFL 12).